A 387-amino-acid chain; its full sequence is Thermostable celloxylanase (387 aa).

The GH10 domain maps to 41-382; the sequence is AEDIPSLAEA…KPAFWAIVDP (342 aa). The Proton donor role is filled by Glu-185. Glu-293 functions as the Nucleophile in the catalytic mechanism.

This sequence belongs to the glycosyl hydrolase 10 (cellulase F) family.

The enzyme catalyses Endohydrolysis of (1-&gt;4)-beta-D-glucosidic linkages in cellulose, lichenin and cereal beta-D-glucans.. It carries out the reaction Endohydrolysis of (1-&gt;4)-beta-D-xylosidic linkages in xylans.. It functions in the pathway glycan degradation; xylan degradation. Functionally, active toward xylan, carboxymethylcellulose, P-nitrophenyl-beta-D-xylopyranoside and P-nitrophenyl-beta-D-cellobioside. The chain is Thermostable celloxylanase (xynB) from Thermoclostridium stercorarium (Clostridium stercorarium).